Reading from the N-terminus, the 270-residue chain is Metallo-beta-lactamase type 2 (270 aa).

An N-terminal signal peptide occupies residues 1–28; sequence MELPNIMHPVAKLSTALAAALMLSGCMP. H120, H122, D124, H189, and C208 together coordinate Zn(2+). Residues K211 and N220 each coordinate substrate. Position 250 (H250) interacts with Zn(2+).

This sequence belongs to the metallo-beta-lactamase superfamily. Class-B beta-lactamase family. In terms of assembly, monomer. It depends on Zn(2+) as a cofactor.

Its subcellular location is the periplasm. The enzyme catalyses a beta-lactam + H2O = a substituted beta-amino acid. Its activity is regulated as follows. Inhibits by captopril, thiorphan, dimercaprol and tiopronin. This enzyme is not susceptible to inactivation by the beta-lactamase-blocking agents clavulanic acid. Functionally, confers resistance to the different beta-lactams antibiotics (penicillin, cephalosporin and carbapenem) via the hydrolysis of the beta-lactam ring. Does not confer resistance to the polymixin colistin or the fluoroquinolone ciprofloxacin. The chain is Metallo-beta-lactamase type 2 from Klebsiella pneumoniae.